The chain runs to 299 residues: 4-diphosphocytidyl-2-C-methyl-D-erythritol kinase (299 aa).

K11 is an active-site residue. 94–104 (PQGGGLGGGSS) is a binding site for ATP. Residue D136 is part of the active site.

Belongs to the GHMP kinase family. IspE subfamily.

The enzyme catalyses 4-CDP-2-C-methyl-D-erythritol + ATP = 4-CDP-2-C-methyl-D-erythritol 2-phosphate + ADP + H(+). It functions in the pathway isoprenoid biosynthesis; isopentenyl diphosphate biosynthesis via DXP pathway; isopentenyl diphosphate from 1-deoxy-D-xylulose 5-phosphate: step 3/6. In terms of biological role, catalyzes the phosphorylation of the position 2 hydroxy group of 4-diphosphocytidyl-2C-methyl-D-erythritol. The sequence is that of 4-diphosphocytidyl-2-C-methyl-D-erythritol kinase from Bordetella parapertussis (strain 12822 / ATCC BAA-587 / NCTC 13253).